A 113-amino-acid polypeptide reads, in one-letter code: Probable UPF0122 protein (113 aa).

The protein belongs to the UPF0122 family.

Its function is as follows. Might take part in the signal recognition particle (SRP) pathway. This is inferred from the conservation of its genetic proximity to ftsY/ffh. May be a regulatory protein. In Mycoplasma mycoides, this protein is Probable UPF0122 protein.